Reading from the N-terminus, the 682-residue chain is Glutamine--fructose-6-phosphate aminotransferase [isomerizing] 2 (682 aa).

The For GATase activity role is filled by C2. A Glutamine amidotransferase type-2 domain is found at 2-288 (CGIFAYMNYR…DDDIAAVADG (287 aa)). Residue S244 is modified to Phosphoserine. 2 consecutive SIS domains span residues 360 to 499 (HLKE…DRIS) and 531 to 672 (LALE…VDFP). Substrate contacts are provided by residues 377–378 (TS), 422–424 (SQS), T427, and H578.

It carries out the reaction D-fructose 6-phosphate + L-glutamine = D-glucosamine 6-phosphate + L-glutamate. Its pathway is nucleotide-sugar biosynthesis; UDP-N-acetyl-alpha-D-glucosamine biosynthesis; alpha-D-glucosamine 6-phosphate from D-fructose 6-phosphate: step 1/1. Its function is as follows. Controls the flux of glucose into the hexosamine pathway. Most likely involved in regulating the availability of precursors for N- and O-linked glycosylation of proteins. This Mus musculus (Mouse) protein is Glutamine--fructose-6-phosphate aminotransferase [isomerizing] 2 (Gfpt2).